The sequence spans 355 residues: Protein MGF 360-10L (355 aa).

One copy of the ANK repeat lies at 57–89; the sequence is DLNTALMLATKENNYQLIKLFTEWGADINYGLI.

Belongs to the asfivirus MGF 360 family.

Its function is as follows. Plays a role in virus cell tropism, and may be required for efficient virus replication in macrophages. The polypeptide is Protein MGF 360-10L (African swine fever virus (isolate Tick/Malawi/Lil 20-1/1983) (ASFV)).